The chain runs to 147 residues: Ribosomal RNA large subunit methyltransferase H (147 aa).

Residues Leu64, Gly95, and 114–119 contribute to the S-adenosyl-L-methionine site; that span reads LSSLTL.

Belongs to the RNA methyltransferase RlmH family. Homodimer.

It localises to the cytoplasm. It catalyses the reaction pseudouridine(1915) in 23S rRNA + S-adenosyl-L-methionine = N(3)-methylpseudouridine(1915) in 23S rRNA + S-adenosyl-L-homocysteine + H(+). In terms of biological role, specifically methylates the pseudouridine at position 1915 (m3Psi1915) in 23S rRNA. The protein is Ribosomal RNA large subunit methyltransferase H of Polynucleobacter asymbioticus (strain DSM 18221 / CIP 109841 / QLW-P1DMWA-1) (Polynucleobacter necessarius subsp. asymbioticus).